The following is a 345-amino-acid chain: Uroporphyrinogen decarboxylase (345 aa).

Substrate is bound by residues 23 to 27, D73, Y149, T203, and H319; that span reads RQAGR.

This sequence belongs to the uroporphyrinogen decarboxylase family. As to quaternary structure, homodimer.

The protein localises to the cytoplasm. It carries out the reaction uroporphyrinogen III + 4 H(+) = coproporphyrinogen III + 4 CO2. It participates in porphyrin-containing compound metabolism; protoporphyrin-IX biosynthesis; coproporphyrinogen-III from 5-aminolevulinate: step 4/4. Catalyzes the decarboxylation of four acetate groups of uroporphyrinogen-III to yield coproporphyrinogen-III. In Vesicomyosocius okutanii subsp. Calyptogena okutanii (strain HA), this protein is Uroporphyrinogen decarboxylase.